The sequence spans 206 residues: Small ribosomal subunit protein uS4 (206 aa).

The S4 RNA-binding domain occupies 96–156 (TRLDNVVYRM…EKSRTQARIK (61 aa)).

Belongs to the universal ribosomal protein uS4 family. Part of the 30S ribosomal subunit. Contacts protein S5. The interaction surface between S4 and S5 is involved in control of translational fidelity.

One of the primary rRNA binding proteins, it binds directly to 16S rRNA where it nucleates assembly of the body of the 30S subunit. In terms of biological role, with S5 and S12 plays an important role in translational accuracy. The protein is Small ribosomal subunit protein uS4 of Shewanella sp. (strain MR-4).